A 510-amino-acid polypeptide reads, in one-letter code: D-alanine--D-alanyl carrier protein ligase (510 aa).

157–158 (TS) serves as a coordination point for ATP. Asp-202 lines the D-alanine pocket. ATP is bound at residue 297-302 (NTYGPT). A D-alanine-binding site is contributed by Val-306. Asp-389 and Lys-498 together coordinate ATP. Lys-498 lines the D-alanine pocket.

Belongs to the ATP-dependent AMP-binding enzyme family. DltA subfamily.

The protein resides in the cytoplasm. It catalyses the reaction holo-[D-alanyl-carrier protein] + D-alanine + ATP = D-alanyl-[D-alanyl-carrier protein] + AMP + diphosphate. It participates in cell wall biogenesis; lipoteichoic acid biosynthesis. Catalyzes the first step in the D-alanylation of lipoteichoic acid (LTA), the activation of D-alanine and its transfer onto the D-alanyl carrier protein (Dcp) DltC. In an ATP-dependent two-step reaction, forms a high energy D-alanyl-AMP intermediate, followed by transfer of the D-alanyl residue as a thiol ester to the phosphopantheinyl prosthetic group of the Dcp. D-alanylation of LTA plays an important role in modulating the properties of the cell wall in Gram-positive bacteria, influencing the net charge of the cell wall. The chain is D-alanine--D-alanyl carrier protein ligase from Listeria monocytogenes serotype 4b (strain CLIP80459).